Reading from the N-terminus, the 119-residue chain is NADH-quinone oxidoreductase subunit A (119 aa).

Helical transmembrane passes span 7–27 (FPVL…VSIG), 63–83 (LVAI…PWGV), and 88–108 (IGWP…LGFA).

This sequence belongs to the complex I subunit 3 family. In terms of assembly, NDH-1 is composed of 14 different subunits. Subunits NuoA, H, J, K, L, M, N constitute the membrane sector of the complex.

Its subcellular location is the cell inner membrane. It carries out the reaction a quinone + NADH + 5 H(+)(in) = a quinol + NAD(+) + 4 H(+)(out). NDH-1 shuttles electrons from NADH, via FMN and iron-sulfur (Fe-S) centers, to quinones in the respiratory chain. The immediate electron acceptor for the enzyme in this species is believed to be ubiquinone. Couples the redox reaction to proton translocation (for every two electrons transferred, four hydrogen ions are translocated across the cytoplasmic membrane), and thus conserves the redox energy in a proton gradient. The polypeptide is NADH-quinone oxidoreductase subunit A (Paraburkholderia xenovorans (strain LB400)).